The sequence spans 511 residues: Glucose-6-phosphate 1-dehydrogenase, cytoplasmic isoform (511 aa).

Residues 36–43, arginine 71, tyrosine 151, and lysine 178 each bind NADP(+); that span reads GASGDLAK. D-glucose 6-phosphate-binding positions include lysine 178, 208-212, glutamate 246, and aspartate 265; that span reads HYLGK. The active-site Proton acceptor is the histidine 270. Lysine 353 serves as a coordination point for NADP(+). D-glucose 6-phosphate contacts are provided by lysine 356 and arginine 361. 3 residues coordinate NADP(+): lysine 362, arginine 366, and arginine 390. Glutamine 392 serves as a coordination point for D-glucose 6-phosphate. NADP(+) contacts are provided by residues 398–400, 418–420, arginine 484, and tryptophan 506; these read YMK and DLS.

Belongs to the glucose-6-phosphate dehydrogenase family. As to quaternary structure, homotetramer. As to expression, found in tubers, stolons, roots, and flower buds.

Its subcellular location is the cytoplasm. It carries out the reaction D-glucose 6-phosphate + NADP(+) = 6-phospho-D-glucono-1,5-lactone + NADPH + H(+). It functions in the pathway carbohydrate degradation; pentose phosphate pathway; D-ribulose 5-phosphate from D-glucose 6-phosphate (oxidative stage): step 1/3. With respect to regulation, regulated by metabolites. In terms of biological role, catalyzes the rate-limiting step of the oxidative pentose-phosphate pathway, which represents a route for the dissimilation of carbohydrates besides glycolysis. The main function of this enzyme is to generate NADPH for reductive biosyntheses. This Solanum tuberosum (Potato) protein is Glucose-6-phosphate 1-dehydrogenase, cytoplasmic isoform (G6PDH).